Reading from the N-terminus, the 69-residue chain is U2-agatoxin-Ao1e (69 aa).

The first 20 residues, Met-1–Ala-20, serve as a signal peptide directing secretion. The propeptide occupies Val-21 to Arg-34. 3 cysteine pairs are disulfide-bonded: Cys-37/Cys-53, Cys-44/Cys-58, and Cys-52/Cys-68.

The protein belongs to the neurotoxin 01 (U2-agtx) family. In terms of tissue distribution, expressed by the venom gland.

It is found in the secreted. Functionally, insect active toxin causing rapid but reversible paralysis in crickets. No activity shown in mammals. Does not show effect on mammalian voltage-gated calcium channels. This Agelena orientalis (Funnel-web spider) protein is U2-agatoxin-Ao1e.